Here is a 462-residue protein sequence, read N- to C-terminus: Alkaline phosphatase 3 (462 aa).

Residues 1–32 form the signal peptide; that stretch reads MKKFPKKLLPIAVLSSIAFSSLASGSVPEASA. D52 provides a ligand contact to Mg(2+). D52 serves as a coordination point for Zn(2+). The active-site Phosphoserine intermediate is the S101. The Mg(2+) site is built by T154 and E275. D280, H284, D322, H323, and H419 together coordinate Zn(2+).

This sequence belongs to the alkaline phosphatase family. Monomer. Requires Mg(2+) as cofactor. It depends on Zn(2+) as a cofactor.

It carries out the reaction a phosphate monoester + H2O = an alcohol + phosphate. This chain is Alkaline phosphatase 3 (phoB), found in Bacillus subtilis (strain 168).